Here is an 819-residue protein sequence, read N- to C-terminus: Sulfate permease 2 (819 aa).

N24 carries an N-linked (GlcNAc...) asparagine glycan. Helical transmembrane passes span 72 to 92 (YNLTWLLGDFIAGVTVGFVVV), 104 to 124 (LAPEYGLYTSFVGFVLYWAFA), 129 to 149 (ITIGAVAVMSTIVGNIIANVQ), 172 to 192 (LLFLGLIRFGFIVEFIPIVAI), 194 to 214 (AFMTGSAISIAAGQVSTLMGI), 273 to 293 (FFVSTLRMVFIIILYILVSWL), 328 to 348 (ILSAISGDIPTTILVLLIEHI), 365 to 385 (SQELVAIGFTNLLGPFLGGYP), 454 to 474 (FWLTSPLEVVIFFAGVFVSIF), and 477 to 497 (IENGIYVTVAASGAVLLWRIA). The region spanning 551 to 708 (ELQISTPWPG…ENHKGGVQEV (158 aa)) is the STAS domain. Residue N581 is glycosylated (N-linked (GlcNAc...) asparagine). The disordered stretch occupies residues 726-766 (EAVPVGTSGSGSTDEKRPEGEGGATNGGMEKGSANGEDIST). Positions 746–755 (EGGATNGGME) are enriched in gly residues.

It belongs to the SLC26A/SulP transporter (TC 2.A.53) family. In terms of tissue distribution, mainly found in mycelia.

Its subcellular location is the membrane. Functionally, uptake of sulfate into the cell. The polypeptide is Sulfate permease 2 (cys-14) (Neurospora crassa (strain ATCC 24698 / 74-OR23-1A / CBS 708.71 / DSM 1257 / FGSC 987)).